The following is a 169-amino-acid chain: Large ribosomal subunit protein uL5 (169 aa).

The protein belongs to the universal ribosomal protein uL5 family. Part of the 50S ribosomal subunit; contacts the 5S rRNA and probably tRNA. Forms a bridge to the 30S subunit in the 70S ribosome.

Its function is as follows. This is one of the proteins that bind and probably mediate the attachment of the 5S RNA into the large ribosomal subunit, where it forms part of the central protuberance. In the 70S ribosome it contacts protein S13 of the 30S subunit (bridge B1b), connecting the 2 subunits; this bridge is implicated in subunit movement. May contact the P site tRNA; the 5S rRNA and some of its associated proteins might help stabilize positioning of ribosome-bound tRNAs. The protein is Large ribosomal subunit protein uL5 of Cenarchaeum symbiosum (strain A).